A 225-amino-acid polypeptide reads, in one-letter code: Cytochrome b6-f complex iron-sulfur subunit, chloroplastic (225 aa).

The transit peptide at 1–46 directs the protein to the chloroplast; it reads MASTALSTASNPTQLCRSRASLGKPVKGLGFGRERVPRTATTITCQ. The chain crosses the membrane as a helical span at residues 69–89; that stretch reads LLGAISLPTVGMLVPYGAFFI. A Rieske domain is found at 112 to 208; it reads AEEWLKTHGP…ADVDDGKVLF (97 aa). 4 residues coordinate [2Fe-2S] cluster: Cys-154, His-156, Cys-172, and His-175. Cys-159 and Cys-174 are joined by a disulfide.

The protein belongs to the Rieske iron-sulfur protein family. The 4 large subunits of the cytochrome b6-f complex are cytochrome b6, subunit IV (17 kDa polypeptide, petD), cytochrome f and the Rieske protein, while the 4 small subunits are petG, petL, petM and petN. The complex functions as a dimer. [2Fe-2S] cluster is required as a cofactor.

It is found in the plastid. The protein localises to the chloroplast thylakoid membrane. The catalysed reaction is 2 oxidized [plastocyanin] + a plastoquinol + 2 H(+)(in) = 2 reduced [plastocyanin] + a plastoquinone + 4 H(+)(out). Its function is as follows. Component of the cytochrome b6-f complex, which mediates electron transfer between photosystem II (PSII) and photosystem I (PSI), cyclic electron flow around PSI, and state transitions. The protein is Cytochrome b6-f complex iron-sulfur subunit, chloroplastic (petC) of Oryza sativa subsp. japonica (Rice).